We begin with the raw amino-acid sequence, 440 residues long: MFLAQEIIRKKRDGHALSDEEIRFFINGIRDNTISEGQIAALAMTIFFHDMTMPERVSLTMAMRDSGTVLDWKSLHLNGPIVDKHSTGGVGDVTSLMLGPMVAACGGYIPMISGRGLGHTGGTLDKLESIPGFDIFPDDNRFREIIKDVGVAIIGQTSSLAPADKRFYATRDITATVDSIPLITASILAKKLAEGLDALVMDVKVGSGAFMPTYELSEALAEAIVGVANGAGVRTTALLTDMNQVLASSAGNAVEVREAVQFLTGEYRNPRLFDVTMALCVEMLISGKLAKDDAEARAKLQAVLDNGKAAEVFGRMVAAQKGPTDFVENYAKYLPTAMLTKAVYADTEGFVSEMDTRALGMAVVAMGGGRRQASDTIDYSVGFTDMARLGDQVDGQRPLAVIHAKDENSWQDAAKAVKAAIKLADKAPESTPTVYRRISE.

It belongs to the thymidine/pyrimidine-nucleoside phosphorylase family. In terms of assembly, homodimer.

It carries out the reaction thymidine + phosphate = 2-deoxy-alpha-D-ribose 1-phosphate + thymine. The protein operates within pyrimidine metabolism; dTMP biosynthesis via salvage pathway; dTMP from thymine: step 1/2. Functionally, the enzymes which catalyze the reversible phosphorolysis of pyrimidine nucleosides are involved in the degradation of these compounds and in their utilization as carbon and energy sources, or in the rescue of pyrimidine bases for nucleotide synthesis. The chain is Thymidine phosphorylase from Escherichia coli (strain 55989 / EAEC).